The sequence spans 96 residues: Small ribosomal subunit protein bS6 (96 aa).

It belongs to the bacterial ribosomal protein bS6 family.

Binds together with bS18 to 16S ribosomal RNA. This chain is Small ribosomal subunit protein bS6, found in Beutenbergia cavernae (strain ATCC BAA-8 / DSM 12333 / CCUG 43141 / JCM 11478 / NBRC 16432 / NCIMB 13614 / HKI 0122).